Reading from the N-terminus, the 184-residue chain is Protein GrpE (184 aa).

The interval 1 to 35 is disordered; that stretch reads MTQENQNPPPEQEDVAADPQVNEAAASEPAAVKTP.

This sequence belongs to the GrpE family. Homodimer.

It is found in the cytoplasm. In terms of biological role, participates actively in the response to hyperosmotic and heat shock by preventing the aggregation of stress-denatured proteins, in association with DnaK and GrpE. It is the nucleotide exchange factor for DnaK and may function as a thermosensor. Unfolded proteins bind initially to DnaJ; upon interaction with the DnaJ-bound protein, DnaK hydrolyzes its bound ATP, resulting in the formation of a stable complex. GrpE releases ADP from DnaK; ATP binding to DnaK triggers the release of the substrate protein, thus completing the reaction cycle. Several rounds of ATP-dependent interactions between DnaJ, DnaK and GrpE are required for fully efficient folding. The chain is Protein GrpE from Polynucleobacter asymbioticus (strain DSM 18221 / CIP 109841 / QLW-P1DMWA-1) (Polynucleobacter necessarius subsp. asymbioticus).